The sequence spans 346 residues: (R,R)-butanediol dehydrogenase (346 aa).

Zn(2+) contacts are provided by Cys37, His70, and Glu152.

This sequence belongs to the zinc-containing alcohol dehydrogenase family. In terms of assembly, homotetramer. Interacts with BrxC. It depends on Zn(2+) as a cofactor.

The protein localises to the cytoplasm. It is found in the secreted. The enzyme catalyses (R,R)-butane-2,3-diol + NAD(+) = (R)-acetoin + NADH + H(+). This Bacillus subtilis (strain 168) protein is (R,R)-butanediol dehydrogenase.